The following is a 94-amino-acid chain: DASH complex subunit DAD1 (94 aa).

At S91 the chain carries Phosphoserine.

The protein belongs to the DASH complex DAD1 family. In terms of assembly, component of the DASH complex consisting of ASK1, DAD1, DAD2, DAD3, DAD4, DAM1, DUO1, HSK3, SPC19 and SPC34, with a stoichiometry of one copy of each subunit per complex. Multiple DASH complexes oligomerize to form a ring that encircles spindle microtubules and organizes the rod-like NDC80 complexes of the outer kinetochore. DASH complex oligomerization strengthens microtubule attachments. On cytoplasmic microtubules, DASH complexes appear to form patches instead of rings.

The protein resides in the nucleus. The protein localises to the cytoplasm. Its subcellular location is the cytoskeleton. It is found in the spindle. It localises to the chromosome. The protein resides in the centromere. The protein localises to the kinetochore. Functionally, component of the DASH complex that connects microtubules with kinetochores and couples microtubule depolymerisation to chromosome movement; it is involved in retrieving kinetochores to the spindle poles before their re-orientation on the spindle in early mitosis and allows microtubule depolymerization to pull chromosomes apart and resist detachment during anaphase. Kinetochores, consisting of a centromere-associated inner segment and a microtubule-contacting outer segment, play a crucial role in chromosome segregation by mediating the physical connection between centromeric DNA and microtubules. Kinetochores also serve as an input point for the spindle assembly checkpoint, which delays anaphase until all chromosomes have bioriented on the mitotic spindle. During spindle-kinetochore attachment, kinetochores first attach to the lateral surface of spindle microtubules, which supports the congression of chromosomes toward the middle of the dividing cell; they then slide along towards the spindle pole, a process independent of the DASH complex but requiring the NDC80 complex. When the end of a disassembling microtubule reaches the laterally attached kinetochore, the DASH complex together with the NDC80 complex and STU2 convert lateral attachment to end-on capture to produce a structure that can track with microtubule shortening and sustain attachment when tension is applied across sister kinetochores upon their biorientation. Microtubule depolymerization proceeds by protofilament splaying and induces the kinetochore-attached DASH complex to slide longitudinally, thereby helping to transduce depolymerization energy into pulling forces to disjoin chromatids. Incorrect microtubule attachments are corrected by releasing microubules from the kinetochore through phosphorylation by IPL1 of kinetochore components. Links the microtubule cytoskeleton to chromosomes during interphase. Also contributes to the poleward transport of kinetochores on microtubules following centromeric DNA replication in S-phase. This chain is DASH complex subunit DAD1 (DAD1), found in Saccharomyces cerevisiae (strain ATCC 204508 / S288c) (Baker's yeast).